Here is a 200-residue protein sequence, read N- to C-terminus: Thymidylate kinase (200 aa).

10-17 serves as a coordination point for ATP; it reads GIDGAGKS.

Belongs to the thymidylate kinase family.

It carries out the reaction dTMP + ATP = dTDP + ADP. Its function is as follows. Phosphorylation of dTMP to form dTDP in both de novo and salvage pathways of dTTP synthesis. The protein is Thymidylate kinase of Cupriavidus metallidurans (strain ATCC 43123 / DSM 2839 / NBRC 102507 / CH34) (Ralstonia metallidurans).